We begin with the raw amino-acid sequence, 129 residues long: Protein yippee-like (129 aa).

Residues 12 to 109 enclose the Yippee domain; it reads KIYSCKHCGT…LERFKITGPD (98 aa). Positions 16, 19, 72, and 75 each coordinate Zn(2+).

This sequence belongs to the yippee family.

This chain is Protein yippee-like, found in Solanum tuberosum (Potato).